Here is a 209-residue protein sequence, read N- to C-terminus: Ribosomal RNA small subunit methyltransferase G (209 aa).

S-adenosyl-L-methionine-binding positions include glycine 71, phenylalanine 76, 122–123 (AE), and arginine 135.

Belongs to the methyltransferase superfamily. RNA methyltransferase RsmG family.

The protein resides in the cytoplasm. In terms of biological role, specifically methylates the N7 position of a guanine in 16S rRNA. The protein is Ribosomal RNA small subunit methyltransferase G of Flavobacterium johnsoniae (strain ATCC 17061 / DSM 2064 / JCM 8514 / BCRC 14874 / CCUG 350202 / NBRC 14942 / NCIMB 11054 / UW101) (Cytophaga johnsonae).